The sequence spans 666 residues: Tripartite terminase subunit 3 (666 aa).

The Walker A motif signature appears at 208–215 (VPRRHGKT). Positions 300 to 305 (LLIVDE) match the Walker B motif motif. Residue Glu305 is the For ATPase activity of the active site. Active-site for nuclease activity residues include Asp458, Glu529, and Asp643.

The protein belongs to the herpesviridae TRM3 protein family. Interacts with the terminase subunits TRM1 and TRM2. Interacts with portal protein.

It is found in the host nucleus. Component of the molecular motor that translocates viral genomic DNA in empty capsid during DNA packaging. Forms a tripartite terminase complex together with TRM1 and TRM2 in the host cytoplasm. Once the complex reaches the host nucleus, it interacts with the capsid portal vertex. This portal forms a ring in which genomic DNA is translocated into the capsid. TRM3 carries an RNase H-like nuclease activity that plays an important role for the cleavage of concatemeric viral DNA into unit length genomes. The protein is Tripartite terminase subunit 3 of Homo sapiens (Human).